Here is a 282-residue protein sequence, read N- to C-terminus: Undecaprenyl-diphosphatase (282 aa).

Helical transmembrane passes span 40–60 (GAAFTAIVQIGTLIAVLIYFF), 85–105 (AKMGWMIAAGTIPIVVFGLLF), 117–137 (YWISAALITLAIILSLAEWLI), 158–178 (ALIIGLVQSIALIPGSSRSGV), 193–213 (AARFSFLLSLPAVFAAGIYQL), 231–251 (IVATLVAGIVGYASIAFLITF), and 258–278 (AVFIIYRIALGLTILALIATG).

The protein belongs to the UppP family.

It localises to the cell inner membrane. It catalyses the reaction di-trans,octa-cis-undecaprenyl diphosphate + H2O = di-trans,octa-cis-undecaprenyl phosphate + phosphate + H(+). Catalyzes the dephosphorylation of undecaprenyl diphosphate (UPP). Confers resistance to bacitracin. The sequence is that of Undecaprenyl-diphosphatase from Prosthecochloris aestuarii (strain DSM 271 / SK 413).